A 248-amino-acid polypeptide reads, in one-letter code: MGDDDTPVCLSVASCKGVSCWLDKLLLWALTLSITLRNTAVDCRRVDRNGLLSPNLNSSMSVVRMGQNVSLSCSSKNTSIDITYSLFLGKRYLESKRRRGGAVDFHLRISNANESGPYKCKVNDSNSSKYSQNFNFTIIQDESCSSCLLSLLLPGVLLGLILPGLAFLIYLKYKKGCTGKTLKENESKGSGDAPTQGELYANICETQKGSEQLQEIHYTTPVFKEVAPTEQEGLEDRKDDYIYSELTY.

The N-terminal stretch at 1–33 is a signal peptide; it reads MGDDDTPVCLSVASCKGVSCWLDKLLLWALTLS. Over 34 to 150 the chain is Extracellular; the sequence is ITLRNTAVDC…DESCSSCLLS (117 aa). The Ig-like C2-type domain maps to 54-137; that stretch reads PNLNSSMSVV…SKYSQNFNFT (84 aa). Residue asparagine 68 is glycosylated (N-linked (GlcNAc...) asparagine). Cysteine 73 and cysteine 120 are joined by a disulfide. Residue asparagine 135 is glycosylated (N-linked (GlcNAc...) asparagine). Residues 151–171 form a helical membrane-spanning segment; that stretch reads LLLPGVLLGLILPGLAFLIYL. Residues 172-248 are Cytoplasmic-facing; it reads KYKKGCTGKT…DDYIYSELTY (77 aa). 2 consecutive short sequence motifs (ITIM motif) follow at residues 216-221 and 241-246; these read IHYTTP and YIYSEL. Phosphotyrosine is present on residues tyrosine 218 and tyrosine 243.

As to quaternary structure, monomer. Interacts (tyrosine-phosphorylated) with PTPN6, PTPN11 and INPP5D. Post-translationally, N-glycosylated. Mast cell-specific. Expressed in primary and transformed mast cells.

The protein localises to the cell membrane. Functionally, immunoglobulin-like receptor which plays an inhibitory role in degranulation of mast cells. Negatively regulates IgE-mediated mast cell activation and suppresses the type I immediate hypersensitivity reaction. The sequence is that of Allergin-1 (Milr1) from Rattus norvegicus (Rat).